The primary structure comprises 258 residues: Indole-3-glycerol phosphate synthase (258 aa).

It belongs to the TrpC family.

It catalyses the reaction 1-(2-carboxyphenylamino)-1-deoxy-D-ribulose 5-phosphate + H(+) = (1S,2R)-1-C-(indol-3-yl)glycerol 3-phosphate + CO2 + H2O. The protein operates within amino-acid biosynthesis; L-tryptophan biosynthesis; L-tryptophan from chorismate: step 4/5. In Campylobacter fetus subsp. fetus (strain 82-40), this protein is Indole-3-glycerol phosphate synthase.